The chain runs to 283 residues: 4-diphosphocytidyl-2-C-methyl-D-erythritol kinase (283 aa).

The active site involves Lys-10. 94–104 (PVAAGLAGGSS) contributes to the ATP binding site. Asp-136 is a catalytic residue.

It belongs to the GHMP kinase family. IspE subfamily.

The enzyme catalyses 4-CDP-2-C-methyl-D-erythritol + ATP = 4-CDP-2-C-methyl-D-erythritol 2-phosphate + ADP + H(+). The protein operates within isoprenoid biosynthesis; isopentenyl diphosphate biosynthesis via DXP pathway; isopentenyl diphosphate from 1-deoxy-D-xylulose 5-phosphate: step 3/6. Catalyzes the phosphorylation of the position 2 hydroxy group of 4-diphosphocytidyl-2C-methyl-D-erythritol. The sequence is that of 4-diphosphocytidyl-2-C-methyl-D-erythritol kinase from Enterococcus faecalis (strain ATCC 700802 / V583).